The chain runs to 287 residues: Aquaporin PIP1-1 (287 aa).

Transmembrane regions (helical) follow at residues 57-77 (IAEF…VMGV) and 92-114 (IAWS…SGHI). Positions 115-117 (NPA) match the NPA 1 motif. The next 3 membrane-spanning stretches (helical) occupy residues 134 to 154 (VFYI…VKGF), 176 to 196 (GDGL…VFSA), and 210 to 230 (ILAP…TMGI). An NPA 2 motif is present at residues 236 to 238 (NPA). The helical transmembrane segment at 258–278 (IFWVGPFIGAALAAIYHQVII) threads the bilayer.

This sequence belongs to the MIP/aquaporin (TC 1.A.8) family. PIP (TC 1.A.8.11) subfamily. As to quaternary structure, may interact with PIP1-2 to form heteromers. Highly expressed in roots, shoots and developing tassels, and at lower levels in leaves.

The protein resides in the cell membrane. Functionally, water channel required to facilitate the transport of water across cell membrane. Active as heteromers with PIP1-2, but not as homomers. This Zea mays (Maize) protein is Aquaporin PIP1-1 (PIP1-1).